The following is a 31-amino-acid chain: GSIPCGESCVYIPCISSIVGCACKSKVCYKN.

The segment at residues 1–31 is a cross-link (cyclopeptide (Gly-Asn)); sequence GSIPCGESCVYIPCISSIVGCACKSKVCYKN. Disulfide bonds link Cys5/Cys21, Cys9/Cys23, and Cys14/Cys28.

Belongs to the cyclotide family. Bracelet subfamily. This is a cyclic peptide.

Functionally, probably participates in a plant defense mechanism. This chain is Cyclotide mden-J, found in Melicytus dentatus (Tree violet).